The sequence spans 139 residues: Putative translationally-controlled tumor protein-like protein TPT1P8 (139 aa).

Positions 1–139 (MIIFQDLISH…KTTSSLLVKT (139 aa)) constitute a TCTP domain. The segment covering 40 to 51 (TGNTDDSLIGRN) has biased composition (polar residues). A disordered region spans residues 40-60 (TGNTDDSLIGRNSSSESTEDE).

It belongs to the TCTP family.

The polypeptide is Putative translationally-controlled tumor protein-like protein TPT1P8 (TPT1P8) (Homo sapiens (Human)).